We begin with the raw amino-acid sequence, 459 residues long: Polycomb protein mes-6 (459 aa).

5 WD repeats span residues 146 to 186 (SVGW…CLIV), 192 to 231 (CHAGTILSVDWSTDGDFILSCGFDHQLMEWDLSVKQVKEH), 305 to 346 (MHSD…GEVE), 370 to 409 (SGSAWFIKFAVDPRRRWLVCGGAGGSVMFFDLRNNEETNP), and 415 to 454 (VGSRTVRQASFSTCGRFLVLVTDEGFVCRFDRVSASVDAK).

This sequence belongs to the WD repeat ESC family. Interacts directly with the N-terminal domain of mes-2. Forms a heterotrimeric complex with mes-2 and mes-3. Does not interact with mes-4. In terms of tissue distribution, in adults, it is predominantly expressed in the germline, and weakly expressed in intestinal cells.

It localises to the nucleus. Functionally, polycomb group (PcG) protein. PcG proteins act by forming multiprotein complexes, which are required to maintain the transcriptionally repressive state of homeotic genes throughout development. In association with the nfya-1-NF-Y complex, may play a role in repressing the expression of the homeobox protein egl-5 in tissues such as the head. PcG proteins are not required to initiate repression, but to maintain it during later stages of development. The mes-2/mes-3/mes-6 complex may participate in the global inactivation of the X chromosomes in germline cells. The complex may act via methylation of histone H3 'Lys-27', rendering chromatin heritably changed in its expressibility. This complex is required to exclude mes-4 from the inactivated X-chromosomes in germline cells. Required for small-RNA-induced H3K27 trimethylation. The polypeptide is Polycomb protein mes-6 (Caenorhabditis elegans).